Here is a 314-residue protein sequence, read N- to C-terminus: Homoserine O-acetyltransferase (314 aa).

The active-site Acyl-thioester intermediate is Cys-142. Lys-163 and Ser-192 together coordinate substrate. His-235 serves as the catalytic Proton acceptor. Glu-237 is a catalytic residue. Arg-249 serves as a coordination point for substrate.

It belongs to the MetA family.

It is found in the cytoplasm. The catalysed reaction is L-homoserine + acetyl-CoA = O-acetyl-L-homoserine + CoA. The protein operates within amino-acid biosynthesis; L-methionine biosynthesis via de novo pathway; O-acetyl-L-homoserine from L-homoserine: step 1/1. Transfers an acetyl group from acetyl-CoA to L-homoserine, forming acetyl-L-homoserine. This chain is Homoserine O-acetyltransferase, found in Streptococcus thermophilus (strain ATCC BAA-250 / LMG 18311).